The chain runs to 191 residues: Protein LURP-one-related 6 (191 aa).

This sequence belongs to the LOR family.

In terms of biological role, might be related to the phospholipid scramblase and tubby-like superfamily of membrane tethered transcription factors. This chain is Protein LURP-one-related 6, found in Arabidopsis thaliana (Mouse-ear cress).